The chain runs to 449 residues: Phosphoglucosamine mutase (449 aa).

Serine 105 functions as the Phosphoserine intermediate in the catalytic mechanism. Residues serine 105, aspartate 242, aspartate 244, and aspartate 246 each coordinate Mg(2+). Serine 105 bears the Phosphoserine mark.

Belongs to the phosphohexose mutase family. The cofactor is Mg(2+). Activated by phosphorylation.

The enzyme catalyses alpha-D-glucosamine 1-phosphate = D-glucosamine 6-phosphate. In terms of biological role, catalyzes the conversion of glucosamine-6-phosphate to glucosamine-1-phosphate. This chain is Phosphoglucosamine mutase, found in Clavibacter sepedonicus (Clavibacter michiganensis subsp. sepedonicus).